The following is a 70-amino-acid chain: Brevinin-1MT1 (70 aa).

Residues 1–22 (MFTLKKSLLLLFFLGTINLSLC) form the signal peptide. A propeptide spanning residues 23–44 (EQERDADEEERRDDDEMDVEVE) is cleaved from the precursor. A disulfide bridge connects residues Cys-64 and Cys-70.

Belongs to the frog skin active peptide (FSAP) family. Brevinin subfamily. Expressed by the skin glands.

It localises to the secreted. In terms of biological role, antimicrobial peptide with activity against a variety of Gram-negative and Gram-positive bacteria and against fungi. Shows strong hemolytic activity against human erythrocytes. The polypeptide is Brevinin-1MT1 (Amolops mantzorum (Sichuan torrent frog)).